We begin with the raw amino-acid sequence, 721 residues long: Protein mu-NS (721 aa).

An interaction with sigma-NS region spans residues 1 to 13 (MASFKGFSVNTVP). The segment at 1 to 38 (MASFKGFSVNTVPVSKAKRDISSLAATPGIRSQPFTPS) is RNA-binding. An interaction with mu-2 region spans residues 14 to 40 (VSKAKRDISSLAATPGIRSQPFTPSVD). An involved in the formation of factory-like inclusions region spans residues 471-721 (SSDMVDGIKL…IDFSVPTDEL (251 aa)). Coiled-coil stretches lie at residues 523–560 (LLSQ…SAQA) and 628–686 (QMNG…NQRQ).

The protein belongs to the orthoreovirus mu-NS protein family. Interacts with mu-2. Interacts with sigma-NS; in viral factories. Interacts with the inner capsid proteins lambda-1 and sigma-2, and outer capsid protein lambda-2; in viral factories. Post-translationally, the N-terminus is blocked.

It is found in the host cytoplasm. Non-structural protein implicated with protein sigma-NS in forming the matrix of viral factories, which are large inclusions in the host cytoplasm where replication intermediates are assembled and viral RNA replication takes place. Together with mu-2, recruits the other core proteins to these factories. This chain is Protein mu-NS (M3), found in Mammalia (T1L).